Reading from the N-terminus, the 187-residue chain is Methylamine dehydrogenase light chain (187 aa).

Positions 1-57 (MKKDTGFDSKIEKLARTTASKTGRRGFIGRLGGFLVGSALLPLLPVDRRSRLGGEVQ) form a signal peptide, tat-type signal. 6 disulfides stabilise this stretch: C79–C144, C85–C117, C92–C177, C94–C142, C102–C133, and C134–C165. Tryptophylquinone is present on W113. The tryptophan tryptophylquinone (Trp-Trp) cross-link spans 113 to 164 (WVASCYNPGDQQTYLIAYRDCCGKQTCGRCNCVNTQGELPVYRPEFNNDIVW).

This sequence belongs to the aromatic amine dehydrogenase light chain family. In terms of assembly, heterotetramer of two light and two heavy chains. It depends on tryptophan tryptophylquinone residue as a cofactor. In terms of processing, predicted to be exported by the Tat system. The position of the signal peptide cleavage has not been experimentally proven. Post-translationally, tryptophan tryptophylquinone (TTQ) is formed by oxidation of the indole ring of a tryptophan to form tryptophylquinone followed by covalent cross-linking with another tryptophan residue.

Its subcellular location is the periplasm. The enzyme catalyses 2 oxidized [amicyanin] + methylamine + H2O = 2 reduced [amicyanin] + formaldehyde + NH4(+) + 2 H(+). Its pathway is one-carbon metabolism; methylamine degradation; formaldehyde from methylamine: step 1/1. Functionally, methylamine dehydrogenase carries out the oxidation of methylamine. Electrons are passed from methylamine dehydrogenase to amicyanin. The protein is Methylamine dehydrogenase light chain (mauA) of Methylophilus methylotrophus (Bacterium W3A1).